We begin with the raw amino-acid sequence, 391 residues long: Arsenite methyltransferase (391 aa).

A disordered region spans residues 1–126; the sequence is MELWTHPTPA…TMVADRDPEE (126 aa). Residues 28-39 are compositionally biased toward polar residues; the sequence is CSQPWATTPGTN. Residues 40 to 65 are compositionally biased toward low complexity; it reads SSDASRTPTTASASATSKPQSASARA. The span at 102 to 116 shows a compositional bias: polar residues; the sequence is KRSTTCEATMSNDNE.

This sequence belongs to the methyltransferase superfamily. Arsenite methyltransferase family.

The enzyme catalyses arsenic triglutathione + [thioredoxin]-dithiol + S-adenosyl-L-methionine + 2 H2O = methylarsonous acid + [thioredoxin]-disulfide + 3 glutathione + S-adenosyl-L-homocysteine + H(+). It carries out the reaction arsenic triglutathione + 2 [thioredoxin]-dithiol + 2 S-adenosyl-L-methionine + H2O = dimethylarsinous acid + 2 [thioredoxin]-disulfide + 3 glutathione + 2 S-adenosyl-L-homocysteine + 2 H(+). It catalyses the reaction arsenic triglutathione + 3 [thioredoxin]-dithiol + 3 S-adenosyl-L-methionine = trimethylarsine + 3 [thioredoxin]-disulfide + 3 glutathione + 3 S-adenosyl-L-homocysteine + 3 H(+). In terms of biological role, catalyzes the transfer of a methyl group from AdoMet to arsenite, producing methylated arsenicals. The polypeptide is Arsenite methyltransferase (Halobacterium salinarum (strain ATCC 700922 / JCM 11081 / NRC-1) (Halobacterium halobium)).